The primary structure comprises 1232 residues: DNA topoisomerase 2 (1232 aa).

ATP is bound by residues Asn-65, Asn-94, 122–124, 135–142, and 352–354; these read SSN, GRHGYGAK, and QNK. One can recognise a Toprim domain in the interval 432-546; sequence RTLIVTEGDS…SLLNRNPGFI (115 aa). Glu-438, Asp-515, and Asp-517 together coordinate Mg(2+). The region spanning 681–1097 is the Topo IIA-type catalytic domain; the sequence is LAHAVDGLKP…APVQMWLDEL (417 aa). Tyr-771 (O-(5'-phospho-DNA)-tyrosine intermediate) is an active-site residue. An interaction with DNA region spans residues 952–961; sequence SLTQRIYING. The segment at 1161 to 1184 is disordered; that stretch reads YVPPPPSKRPHVGQSVGGGGGGGS. The span at 1175–1184 shows a compositional bias: gly residues; sequence SVGGGGGGGS.

This sequence belongs to the type II topoisomerase family. As to quaternary structure, homodimer. Requires Mg(2+) as cofactor. The cofactor is Mn(2+). Ca(2+) is required as a cofactor.

Its subcellular location is the nucleus. The enzyme catalyses ATP-dependent breakage, passage and rejoining of double-stranded DNA.. Functionally, control of topological states of DNA by transient breakage and subsequent rejoining of DNA strands. Topoisomerase II makes double-strand breaks. The protein is DNA topoisomerase 2 (TOP2) of Trypanosoma cruzi.